The primary structure comprises 346 residues: DNA polymerase IV 2 (346 aa).

Residues 9–191 (ILHVDLDQFL…RTVEALWGVG (183 aa)) form the UmuC domain. Residues Asp13 and Asp111 each contribute to the Mg(2+) site. The active site involves Glu112.

It belongs to the DNA polymerase type-Y family. As to quaternary structure, monomer. The cofactor is Mg(2+).

Its subcellular location is the cytoplasm. The enzyme catalyses DNA(n) + a 2'-deoxyribonucleoside 5'-triphosphate = DNA(n+1) + diphosphate. Poorly processive, error-prone DNA polymerase involved in untargeted mutagenesis. Copies undamaged DNA at stalled replication forks, which arise in vivo from mismatched or misaligned primer ends. These misaligned primers can be extended by PolIV. Exhibits no 3'-5' exonuclease (proofreading) activity. May be involved in translesional synthesis, in conjunction with the beta clamp from PolIII. The protein is DNA polymerase IV 2 (dinB2) of Mycobacterium bovis (strain ATCC BAA-935 / AF2122/97).